Here is an 88-residue protein sequence, read N- to C-terminus: Antitoxin HipB (88 aa).

In terms of domain architecture, HTH cro/C1-type spans 17–71; it reads MKLVRQQNGWTQSELAKKIGIKQATISNFENNPDNTTLTTFFKILQSLELSMTLC. The H-T-H motif DNA-binding region spans 21-47; that stretch reads RQQNGWTQSELAKKIGIKQATISNFEN.

As to quaternary structure, homodimer. Binds operator DNA sites in the absence of HipA, inducing a 70 degree bend in consecutive operators and deforming DNA between the operators so that HipB dimers bind on opposite faces of the DNA. Forms a HipA(2)HipB(2) heterotetramer which can interact with a single operator site on DNA, inducing a 70 degree bend. When 2 operators are present each HipB dimer contacts 1 HipA molecule, which are brought together by the DNA bend and dimerize, blocking the HipA active site and inactivating its toxic activity. HipA-HipB-induced bending also distorts the -35 and -10 boxes of the promoter and probably prevents sigma-factor binding, and additionally bound HipB and HipA block RNA polymerase access to the -35 box, thus repressing the operon. This complex also blocks the toxic activity of HipA. Mutations present in allele hipA7 (G22S and D291A) decrease the affinity of HipA for HipB. Degraded by Lon protease in vivo; half-life is 17 minutes in wild-type cells and over 200 minutes in a lon deletion strain. In vitro degradation by Lon is Mg(2+)-ATP-dependent.

Its activity is regulated as follows. Degraded by Lon protease; degradation is inhibited in a HipA-HipB complex and when bound to the operator consensus sequence dsDNA. In terms of biological role, antitoxin component of a type II toxin-antitoxin (TA) system. Neutralizes the toxic effect of cognate toxin HipA. Also neutralizes the toxic effect of non-cognate toxin YjjJ. Binds to operator sites with the consensus sequence 5-'TATCCN(8)GGATA-3' to repress the hipBA operon promoter; binding of HipB(2) to DNA induces a 70 degree bend. This forces HipA dimerization, which blocks HipA's active site and thus its toxic action. May play a role in biofilm formation. The chain is Antitoxin HipB (hipB) from Escherichia coli (strain K12).